The following is a 157-amino-acid chain: MNLTHLDEQNKPKMVDVSDKDNTTRIATASGIIEVGQAAFDAVIANTAKKGPVLQTAVIAAIQGTKQTSTLIPMCHPLMLTSVKTDIEELPELPGFKLTVTAKLTGQTGVEMEALTGVSVGLLTIYDMLKAIDKGMVIRNVQLEHKSGGNSGDFNRA.

Residues 74–76 (MCH) and 112–113 (ME) each bind substrate. Aspartate 127 is a catalytic residue.

The protein belongs to the MoaC family. As to quaternary structure, homohexamer; trimer of dimers.

The enzyme catalyses (8S)-3',8-cyclo-7,8-dihydroguanosine 5'-triphosphate = cyclic pyranopterin phosphate + diphosphate. Its pathway is cofactor biosynthesis; molybdopterin biosynthesis. Functionally, catalyzes the conversion of (8S)-3',8-cyclo-7,8-dihydroguanosine 5'-triphosphate to cyclic pyranopterin monophosphate (cPMP). In Sulfurovum sp. (strain NBC37-1), this protein is Cyclic pyranopterin monophosphate synthase.